A 75-amino-acid chain; its full sequence is MEEIPFENAMERLEEIVDLMNQPSTSLDSSLKLYEEADALMRICESRIRKAEDRVRELSERRNETLLSEEESFAH.

This sequence belongs to the XseB family. Heterooligomer composed of large and small subunits.

The protein resides in the cytoplasm. It catalyses the reaction Exonucleolytic cleavage in either 5'- to 3'- or 3'- to 5'-direction to yield nucleoside 5'-phosphates.. Functionally, bidirectionally degrades single-stranded DNA into large acid-insoluble oligonucleotides, which are then degraded further into small acid-soluble oligonucleotides. The sequence is that of Exodeoxyribonuclease 7 small subunit from Chlamydia felis (strain Fe/C-56) (Chlamydophila felis).